The chain runs to 423 residues: Putative RING-H2 finger protein ATL49 (423 aa).

The helical transmembrane segment at 43 to 63 (ILLIIIILSIIFFISGLLHIL) threads the bilayer. An RING-type; atypical zinc finger spans residues 126–168 (CPVCLCEFETEDKLRLLPKCSHAFHVECIDTWLLSHSTCPLCR). Disordered stretches follow at residues 213 to 236 (NNDS…DMDG) and 377 to 399 (HRIP…KTPS). The segment covering 379–389 (IPPEESLKSEN) has biased composition (basic and acidic residues).

This sequence belongs to the RING-type zinc finger family. ATL subfamily.

It localises to the membrane. The enzyme catalyses S-ubiquitinyl-[E2 ubiquitin-conjugating enzyme]-L-cysteine + [acceptor protein]-L-lysine = [E2 ubiquitin-conjugating enzyme]-L-cysteine + N(6)-ubiquitinyl-[acceptor protein]-L-lysine.. Its pathway is protein modification; protein ubiquitination. Its function is as follows. May be involved in female gametophyte development. The polypeptide is Putative RING-H2 finger protein ATL49 (ATL49) (Arabidopsis thaliana (Mouse-ear cress)).